A 210-amino-acid polypeptide reads, in one-letter code: dITP/XTP pyrophosphatase (210 aa).

19–24 (SNNPGK) lines the substrate pocket. Mg(2+)-binding residues include Asp51 and Asp80. Asp80 functions as the Proton acceptor in the catalytic mechanism. Substrate-binding positions include Ser81, 166 to 169 (FGYD), Lys189, and 194 to 195 (HR).

The protein belongs to the HAM1 NTPase family. As to quaternary structure, homodimer. The cofactor is Mg(2+).

The catalysed reaction is XTP + H2O = XMP + diphosphate + H(+). It catalyses the reaction dITP + H2O = dIMP + diphosphate + H(+). It carries out the reaction ITP + H2O = IMP + diphosphate + H(+). In terms of biological role, pyrophosphatase that catalyzes the hydrolysis of nucleoside triphosphates to their monophosphate derivatives, with a high preference for the non-canonical purine nucleotides XTP (xanthosine triphosphate), dITP (deoxyinosine triphosphate) and ITP. Seems to function as a house-cleaning enzyme that removes non-canonical purine nucleotides from the nucleotide pool, thus preventing their incorporation into DNA/RNA and avoiding chromosomal lesions. The chain is dITP/XTP pyrophosphatase from Burkholderia mallei (strain ATCC 23344).